Reading from the N-terminus, the 151-residue chain is Large ribosomal subunit protein uL13 (151 aa).

This sequence belongs to the universal ribosomal protein uL13 family. In terms of assembly, part of the 50S ribosomal subunit.

This protein is one of the early assembly proteins of the 50S ribosomal subunit, although it is not seen to bind rRNA by itself. It is important during the early stages of 50S assembly. This Picosynechococcus sp. (strain ATCC 27264 / PCC 7002 / PR-6) (Agmenellum quadruplicatum) protein is Large ribosomal subunit protein uL13.